Here is a 556-residue protein sequence, read N- to C-terminus: 2-succinyl-5-enolpyruvyl-6-hydroxy-3-cyclohexene-1-carboxylate synthase (556 aa).

The protein belongs to the TPP enzyme family. MenD subfamily. Homodimer. Mg(2+) serves as cofactor. Mn(2+) is required as a cofactor. Requires thiamine diphosphate as cofactor.

It carries out the reaction isochorismate + 2-oxoglutarate + H(+) = 5-enolpyruvoyl-6-hydroxy-2-succinyl-cyclohex-3-ene-1-carboxylate + CO2. The protein operates within quinol/quinone metabolism; 1,4-dihydroxy-2-naphthoate biosynthesis; 1,4-dihydroxy-2-naphthoate from chorismate: step 2/7. It functions in the pathway quinol/quinone metabolism; menaquinone biosynthesis. In terms of biological role, catalyzes the thiamine diphosphate-dependent decarboxylation of 2-oxoglutarate and the subsequent addition of the resulting succinic semialdehyde-thiamine pyrophosphate anion to isochorismate to yield 2-succinyl-5-enolpyruvyl-6-hydroxy-3-cyclohexene-1-carboxylate (SEPHCHC). The protein is 2-succinyl-5-enolpyruvyl-6-hydroxy-3-cyclohexene-1-carboxylate synthase of Escherichia coli (strain ATCC 8739 / DSM 1576 / NBRC 3972 / NCIMB 8545 / WDCM 00012 / Crooks).